We begin with the raw amino-acid sequence, 216 residues long: Elongation factor 1-beta (216 aa).

The disordered stretch occupies residues Gly-71 to Ser-131. A compositionally biased stretch (low complexity) spans Ala-73–Ala-89. Over residues Asp-92–Glu-107 the composition is skewed to acidic residues. The segment covering Glu-108 to Gly-128 has biased composition (basic and acidic residues).

This sequence belongs to the EF-1-beta/EF-1-delta family. EF-1 is composed of 4 subunits: alpha, beta (1B-alpha=beta'), delta (1B-beta), and gamma (1B-gamma).

EF-1-beta and EF-1-beta' stimulate the exchange of GDP bound to EF-1-alpha to GTP. The polypeptide is Elongation factor 1-beta (Triticum aestivum (Wheat)).